A 495-amino-acid polypeptide reads, in one-letter code: 3-octaprenyl-4-hydroxybenzoate carboxy-lyase (495 aa).

Mn(2+) is bound at residue Asn172. Residues 175-177 (IYR), 189-191 (RWL), and 194-195 (RG) contribute to the prenylated FMN site. Residue Glu238 participates in Mn(2+) binding. The active-site Proton donor is Asp287.

It belongs to the UbiD family. Homohexamer. Requires prenylated FMN as cofactor. It depends on Mn(2+) as a cofactor.

Its subcellular location is the cell membrane. The catalysed reaction is a 4-hydroxy-3-(all-trans-polyprenyl)benzoate + H(+) = a 2-(all-trans-polyprenyl)phenol + CO2. It participates in cofactor biosynthesis; ubiquinone biosynthesis. Its function is as follows. Catalyzes the decarboxylation of 3-octaprenyl-4-hydroxy benzoate to 2-octaprenylphenol, an intermediate step in ubiquinone biosynthesis. This chain is 3-octaprenyl-4-hydroxybenzoate carboxy-lyase, found in Yersinia pseudotuberculosis serotype O:1b (strain IP 31758).